The following is a 578-amino-acid chain: Penicillin-binding protein activator LpoA (578 aa).

Positions 1–30 (MPTILVQSYGFRQKMKTIFIPTALALLLAA) are cleaved as a signal peptide. Cysteine 31 carries the N-palmitoyl cysteine lipid modification. Cysteine 31 carries S-diacylglycerol cysteine lipidation.

This sequence belongs to the LpoA family. Interacts with PBP1a.

Its subcellular location is the cell outer membrane. Its function is as follows. Regulator of peptidoglycan synthesis that is essential for the function of penicillin-binding protein 1A (PBP1a). The sequence is that of Penicillin-binding protein activator LpoA from Glaesserella parasuis serovar 5 (strain SH0165) (Haemophilus parasuis).